The sequence spans 418 residues: Flavin-dependent L-tryptophan oxidase VioA (418 aa).

Mg(2+) is bound at residue Gly13. Ser15 contributes to the FAD binding site. Residue Gly16 coordinates Mg(2+). Positions 38, 46, and 64 each coordinate FAD. Substrate-binding residues include Arg64 and His163. Leu208 contributes to the FAD binding site. Ala240 provides a ligand contact to Mg(2+). Tyr309 lines the substrate pocket. Residue Met398 participates in FAD binding.

Belongs to the flavin monoamine oxidase family. As to quaternary structure, homodimer. Requires FAD as cofactor. Mg(2+) is required as a cofactor.

The enzyme catalyses L-tryptophan + O2 = 2-iminio-3-(indol-3-yl)propanoate + H2O2. It carries out the reaction 7-chloro-L-tryptophan + O2 = 3-(7-chloroindol-3-yl)-2-iminopropanoate + H2O2. Its pathway is pigment biosynthesis; violacein biosynthesis. Its function is as follows. The enzyme generates the imine form of indole 3-pyruvate (IPA) from L-tryptophan (L-Trp), with concomitant two-electron reduction of O(2) to H(2)O(2). This chain is Flavin-dependent L-tryptophan oxidase VioA (vioA), found in Chromobacterium violaceum (strain ATCC 12472 / DSM 30191 / JCM 1249 / CCUG 213 / NBRC 12614 / NCIMB 9131 / NCTC 9757 / MK).